The sequence spans 96 residues: Co-chaperonin GroES (96 aa).

Belongs to the GroES chaperonin family. In terms of assembly, heptamer of 7 subunits arranged in a ring. Interacts with the chaperonin GroEL.

It localises to the cytoplasm. Functionally, together with the chaperonin GroEL, plays an essential role in assisting protein folding. The GroEL-GroES system forms a nano-cage that allows encapsulation of the non-native substrate proteins and provides a physical environment optimized to promote and accelerate protein folding. GroES binds to the apical surface of the GroEL ring, thereby capping the opening of the GroEL channel. The polypeptide is Co-chaperonin GroES (Acinetobacter baylyi (strain ATCC 33305 / BD413 / ADP1)).